Reading from the N-terminus, the 507-residue chain is ATP synthase subunit alpha, chloroplastic (507 aa).

170-177 (GDRQTGKT) is a binding site for ATP.

It belongs to the ATPase alpha/beta chains family. F-type ATPases have 2 components, CF(1) - the catalytic core - and CF(0) - the membrane proton channel. CF(1) has five subunits: alpha(3), beta(3), gamma(1), delta(1), epsilon(1). CF(0) has four main subunits: a, b, b' and c.

It is found in the plastid. Its subcellular location is the chloroplast thylakoid membrane. It catalyses the reaction ATP + H2O + 4 H(+)(in) = ADP + phosphate + 5 H(+)(out). Its function is as follows. Produces ATP from ADP in the presence of a proton gradient across the membrane. The alpha chain is a regulatory subunit. This chain is ATP synthase subunit alpha, chloroplastic, found in Silene latifolia (White campion).